Here is a 204-residue protein sequence, read N- to C-terminus: CASP-like protein 3A1 (204 aa).

At 1–39 (MGSIGNGRNGSEVGIQIPAMGNKEVLERPAIPRWPRLGV) the chain is on the cytoplasmic side. A helical transmembrane segment spans residues 40–60 (VMVATRAVALVMAVLSMALMI). Residues 61 to 88 (SAKQRGSLKIFGIEIPLYANWSFSDSLE) lie on the Extracellular side of the membrane. N-linked (GlcNAc...) asparagine glycosylation occurs at Asn-80. Residues 89–109 (YLVGMSAVSAAYCLAQLLLTA) form a helical membrane-spanning segment. At 110 to 124 (HKAVKNAPVVQSRNY) the chain is on the cytoplasmic side. A helical transmembrane segment spans residues 125–145 (AWLLFTGDQIFAYAMMSAGSA). The Extracellular portion of the chain corresponds to 146–179 (AAAVANLNRTGIRHTALPNFCKPLPRFCDLSAAS). A glycan (N-linked (GlcNAc...) asparagine) is linked at Asn-153. A helical membrane pass occupies residues 180–200 (IACAFLSCIFLAASAVIDVIW). Residues 201–204 (LSNM) are Cytoplasmic-facing.

It belongs to the Casparian strip membrane proteins (CASP) family. In terms of assembly, homodimer and heterodimers.

The protein resides in the cell membrane. In Oryza sativa subsp. indica (Rice), this protein is CASP-like protein 3A1.